The following is a 325-amino-acid chain: Deoxyhypusine hydroxylase (325 aa).

Residue Ser-2 is modified to N-acetylserine. HEAT-like PBS-type repeat units lie at residues Leu-77–Asp-103 and Val-110–Glu-136. Positions 79, 80, 112, and 113 each coordinate Fe cation. Position 126 is a phosphoserine (Ser-126). Thr-187 is subject to Phosphothreonine. 3 HEAT-like PBS-type repeats span residues Leu-202–Glu-231, Phe-235–Arg-261, and Val-268–Asp-294. Positions 237, 238, 270, and 271 each coordinate Fe cation. Phosphoserine is present on Ser-281.

Belongs to the deoxyhypusine hydroxylase family. Fe(2+) serves as cofactor.

The protein resides in the cytoplasm. Its subcellular location is the nucleus. It catalyses the reaction [eIF5A protein]-deoxyhypusine + AH2 + O2 = [eIF5A protein]-hypusine + A + H2O. It functions in the pathway protein modification; eIF5A hypusination. In terms of biological role, catalyzes the hydroxylation of the N(6)-(4-aminobutyl)-L-lysine intermediate to form hypusine, an essential post-translational modification only found in mature eIF-5A factor. The sequence is that of Deoxyhypusine hydroxylase from Saccharomyces cerevisiae (strain ATCC 204508 / S288c) (Baker's yeast).